The sequence spans 267 residues: Ras-related protein Rab-36 (267 aa).

Val-68, Gly-69, Lys-70, Thr-71, Ser-72, Asp-83, Tyr-86, and Thr-89 together coordinate GTP. Thr-71 contributes to the Mg(2+) binding site. Positions 76-94 match the Switch 1 motif; sequence RFCKNVFDRDYKATIGVDF. Residues Thr-89 and Asp-112 each contribute to the Mg(2+) site. The Switch 2 signature appears at 113-132; sequence TAGQEKFKCIASAYYRGAQV. GTP-binding residues include Gly-115, Lys-172, Asp-174, Ser-203, Ala-204, and Lys-205. A disordered region spans residues 243–267; the sequence is GDLIQMEGSPPETQESKRPSSLGCC. 2 S-geranylgeranyl cysteine lipidation sites follow: Cys-266 and Cys-267.

This sequence belongs to the small GTPase superfamily. Rab family. Requires Mg(2+) as cofactor. As to expression, ubiquitously present in all tissues examined.

It is found in the golgi apparatus membrane. The catalysed reaction is GTP + H2O = GDP + phosphate + H(+). With respect to regulation, regulated by guanine nucleotide exchange factors (GEFs) which promote the exchange of bound GDP for free GTP. Regulated by GTPase activating proteins (GAPs) which increase the GTP hydrolysis activity. Inhibited by GDP dissociation inhibitors (GDIs). Its function is as follows. The small GTPases Rab are key regulators of intracellular membrane trafficking, from the formation of transport vesicles to their fusion with membranes. Rabs cycle between an inactive GDP-bound form and an active GTP-bound form that is able to recruit to membranes different sets of downstream effectors directly responsible for vesicle formation, movement, tethering and fusion. The sequence is that of Ras-related protein Rab-36 from Homo sapiens (Human).